Reading from the N-terminus, the 587-residue chain is Kelch-like protein 3 (587 aa).

The disordered stretch occupies residues 1 to 24 (MEGESVKPSPQPTEQAGDGEKNRR). Positions 50–117 (CDVMIVAEDV…IYTAEIEVTE (68 aa)) constitute a BTB domain. Residues 152–254 (CLGIRAFADV…PRDYLVQTVE (103 aa)) enclose the BACK domain. At Thr-295 the chain carries Phosphothreonine. Kelch repeat units follow at residues 302–347 (VMIV…FMAG), 348–394 (HVYA…VLND), 396–441 (LYAV…VVEG), 442–490 (KLYA…VLSG), 491–537 (QLYA…AVNG), and 539–585 (LYVV…VSAS). Thr-375 is subject to Phosphothreonine. 2 positions are modified to phosphoserine: Ser-376 and Ser-433.

This sequence belongs to the KLHL3 family. As to quaternary structure, homodimer. Component of the BCR(KLHL3) E3 ubiquitin ligase complex, at least composed of CUL3 and KLHL3 and RBX1. Interacts with CLDN8. In terms of processing, phosphorylation at Ser-433 by PKA or PKC decreases the interaction with WNK1 and WNK4, leading to inhibit their degradation by the BCR(KLHL3) complex. Phosphorylated at Ser-433 by PKC in response to angiotensin II signaling, decreasing ability to promote degradation of WNK1 and WNK4, leading to activation of Na-Cl cotransporter SLC12A3/NCC. Phosphorylation at Ser-433 is increased by insulin. Dephosphorylated at Ser-433 by calcineurin PPP3CA, promoting degradation of WNK1 and WNK4.

The protein localises to the cytoplasm. The protein resides in the cytoskeleton. It is found in the cytosol. It functions in the pathway protein modification; protein ubiquitination. Substrate-specific adapter of a BCR (BTB-CUL3-RBX1) E3 ubiquitin ligase complex that acts as a regulator of ion transport in the distal nephron. The BCR(KLHL3) complex acts by mediating ubiquitination and degradation of WNK1 and WNK4, two activators of Na-Cl cotransporter SLC12A3/NCC in distal convoluted tubule cells of kidney, thereby regulating NaCl reabsorption. The BCR(KLHL3) complex also mediates ubiquitination and degradation of WNK3. The BCR(KLHL3) complex also mediates ubiquitination of CLDN8, a tight-junction protein required for paracellular chloride transport in the kidney, leading to its degradation. The sequence is that of Kelch-like protein 3 (Klhl3) from Rattus norvegicus (Rat).